The chain runs to 386 residues: Succinate--CoA ligase [ADP-forming] subunit beta (386 aa).

One can recognise an ATP-grasp domain in the interval 9–244 (KDLLTAYQLP…PSQENIRDVL (236 aa)). Residues K46, 53 to 55 (GRG), V102, and E107 each bind ATP. N199 and D213 together coordinate Mg(2+). Residues N264 and 321 to 323 (GIM) each bind substrate.

This sequence belongs to the succinate/malate CoA ligase beta subunit family. In terms of assembly, heterotetramer of two alpha and two beta subunits. Mg(2+) serves as cofactor.

It carries out the reaction succinate + ATP + CoA = succinyl-CoA + ADP + phosphate. The catalysed reaction is GTP + succinate + CoA = succinyl-CoA + GDP + phosphate. It functions in the pathway carbohydrate metabolism; tricarboxylic acid cycle; succinate from succinyl-CoA (ligase route): step 1/1. Its function is as follows. Succinyl-CoA synthetase functions in the citric acid cycle (TCA), coupling the hydrolysis of succinyl-CoA to the synthesis of either ATP or GTP and thus represents the only step of substrate-level phosphorylation in the TCA. The beta subunit provides nucleotide specificity of the enzyme and binds the substrate succinate, while the binding sites for coenzyme A and phosphate are found in the alpha subunit. The polypeptide is Succinate--CoA ligase [ADP-forming] subunit beta (Chlamydia trachomatis serovar A (strain ATCC VR-571B / DSM 19440 / HAR-13)).